Here is a 447-residue protein sequence, read N- to C-terminus: Asparagine--tRNA ligase (447 aa).

This sequence belongs to the class-II aminoacyl-tRNA synthetase family. As to quaternary structure, homodimer.

The protein localises to the cytoplasm. The enzyme catalyses tRNA(Asn) + L-asparagine + ATP = L-asparaginyl-tRNA(Asn) + AMP + diphosphate + H(+). This chain is Asparagine--tRNA ligase, found in Herpetosiphon aurantiacus (strain ATCC 23779 / DSM 785 / 114-95).